The sequence spans 232 residues: CMP-N,N'-diacetyllegionaminic acid synthase (232 aa).

Belongs to the CMP-NeuNAc synthase family.

It catalyses the reaction N,N-diacetyllegionaminate + CTP = CMP-N,N-diacetyllegionaminate + diphosphate. Involved in biosynthesis of legionaminic acid (5,7-diamino-3,5,7,9-tetradeoxy-D-glycero-D-galacto-non-2-ulosonic acid)(Leg), a sialic acid-like derivative that is incorporated into virulence-associated cell surface glycoconjugates such as lipopolysaccharide (LPS) which could be a key determinant in the ability of L.pneumophila to inhibit the fusion of phagosomes with lysosomes. LPS contains a majority alpha2,4-linked homomer of legionaminic acid. Catalyzes the conversion of N,N'-diacetyllegionaminic acid (Leg5Ac7Ac) and CTP into CMP-N,N'-diacetyllegionaminic acid (CMP-Leg5Ac7Ac). The polypeptide is CMP-N,N'-diacetyllegionaminic acid synthase (neuA) (Legionella pneumophila subsp. pneumophila (strain Philadelphia 1 / ATCC 33152 / DSM 7513)).